A 316-amino-acid polypeptide reads, in one-letter code: Pantothenate kinase (316 aa).

95–102 (GSVAVGKS) contacts ATP.

This sequence belongs to the prokaryotic pantothenate kinase family.

It localises to the cytoplasm. It catalyses the reaction (R)-pantothenate + ATP = (R)-4'-phosphopantothenate + ADP + H(+). Its pathway is cofactor biosynthesis; coenzyme A biosynthesis; CoA from (R)-pantothenate: step 1/5. The protein is Pantothenate kinase of Shewanella pealeana (strain ATCC 700345 / ANG-SQ1).